Reading from the N-terminus, the 237-residue chain is Type II secretion system protein J (237 aa).

Residues 1-6 constitute a propeptide, leader sequence; sequence MRLQRG. The residue at position 7 (Phe-7) is an N-methylphenylalanine. The chain crosses the membrane as a helical span at residues 7–29; the sequence is FTLLELLIAIAIFALLALATYRM. A disordered region spans residues 203–237; the sequence is PLKQDQPQGQPGGENGENGEGGVPQPPEGMPGAPE. Gly residues predominate over residues 212-224; sequence QPGGENGENGEGG. Pro residues predominate over residues 226–237; that stretch reads PQPPEGMPGAPE.

It belongs to the GSP J family. In terms of assembly, type II secretion is composed of four main components: the outer membrane complex, the inner membrane complex, the cytoplasmic secretion ATPase and the periplasm-spanning pseudopilus. Forms the tip of the type II pseudopilus by interacting with XcpV, XcpU and XcpX. Interacts with core component XcpT. In terms of processing, cleaved by prepilin peptidase. Methylated by prepilin peptidase at the amino group of the N-terminal phenylalanine once the leader sequence is cleaved by prepilin peptidase.

The protein resides in the cell inner membrane. In terms of biological role, component of the type II secretion system required for the energy-dependent secretion of extracellular factors such as proteases and toxins from the periplasm. Part of the pseudopilus tip complex that is critical for the recognition and binding of secretion substrates. Type II pseudopilus confers increased bacterial adhesive capabilities. This is Type II secretion system protein J (xcpW) from Pseudomonas aeruginosa (strain ATCC 15692 / DSM 22644 / CIP 104116 / JCM 14847 / LMG 12228 / 1C / PRS 101 / PAO1).